The following is a 79-amino-acid chain: uncharacterized protein (79 aa).

Positions 3 to 54 constitute a TM2 domain; it reads SKKNKIVAALLAFFFGGLGIHKFYLGRVGQGILYILFCWTGIPSIIAFIEFI. 2 helical membrane passes run 8-28 and 37-57; these read IVAA…FYLG and ILFC…IIFL.

The protein localises to the cell membrane. This is an uncharacterized protein from Bacillus subtilis (strain 168).